The primary structure comprises 324 residues: MIIVLGIRTDLALEARELYKEREIPGVSIREEGEEGIKITRVKILDERGEKAMGKPVGDYITIEAPGLLERDLDLEERVAKVLANIISELAQLKKDSHVLVVGLGNWNVTPDALGPRVVSNIVVTRHLKEYAPLQFGDEIRSVSAFSPGVLGITGIETAEILKGVVDRVKPDLVITIDALASRRLERLSTTIQISNTGISPGSGVGNRRLSITSESLGVPVIAIGVPTVVDAVTIAHDTIEYLVKELSEQTSKESVFYKVLENMNKQEKYSLIEEVLSPYVQNLVVTPKEIDLLIKNIALVISRGINLALQPGLTEKEMNQLLH.

Residues 1 to 10 constitute a propeptide that is removed on maturation; it reads MIIVLGIRTD.

This sequence belongs to the peptidase A25 family. As to quaternary structure, homotetramer. In terms of processing, autoproteolytically processed. The inactive tetrameric zymogen termed p46 autoprocesses to a smaller form termed p41, which is active only during spore germination.

It catalyses the reaction Endopeptidase action with P4 Glu or Asp, P1 preferably Glu &gt; Asp, P1' hydrophobic and P2' Ala.. Its function is as follows. Initiates the rapid degradation of small, acid-soluble proteins during spore germination. The protein is Germination protease of Caldanaerobacter subterraneus subsp. tengcongensis (strain DSM 15242 / JCM 11007 / NBRC 100824 / MB4) (Thermoanaerobacter tengcongensis).